Here is a 93-residue protein sequence, read N- to C-terminus: Putative pterin-4-alpha-carbinolamine dehydratase (93 aa).

Belongs to the pterin-4-alpha-carbinolamine dehydratase family.

The enzyme catalyses (4aS,6R)-4a-hydroxy-L-erythro-5,6,7,8-tetrahydrobiopterin = (6R)-L-erythro-6,7-dihydrobiopterin + H2O. The chain is Putative pterin-4-alpha-carbinolamine dehydratase from Trichodesmium erythraeum (strain IMS101).